The following is a 1488-amino-acid chain: Chromosome partition protein MukB (1488 aa).

ATP is bound at residue 34 to 41 (GGNGAGKS). Coiled-coil stretches lie at residues 326–418 (LEAD…QYNQ), 444–472 (LDTF…QTAH), and 509–602 (RHLA…QRAP). The flexible hinge stretch occupies residues 666–783 (PGGAEDQRLN…SLPIFGRAAR (118 aa)). Coiled coils occupy residues 835 to 923 (EAEI…AKLE), 977 to 1116 (EMLS…AKAG), and 1209 to 1265 (VEAI…LQSV). A disordered region spans residues 1049 to 1074 (ADSGAEERARQRRDELHAQLSNNRSR). Residues 1051–1065 (SGAEERARQRRDELH) show a composition bias toward basic and acidic residues.

This sequence belongs to the SMC family. MukB subfamily. Homodimerization via its hinge domain. Binds to DNA via its C-terminal region. Interacts, and probably forms a ternary complex, with MukE and MukF via its C-terminal region. The complex formation is stimulated by calcium or magnesium. Interacts with tubulin-related protein FtsZ.

The protein resides in the cytoplasm. Its subcellular location is the nucleoid. Its function is as follows. Plays a central role in chromosome condensation, segregation and cell cycle progression. Functions as a homodimer, which is essential for chromosome partition. Involved in negative DNA supercoiling in vivo, and by this means organize and compact chromosomes. May achieve or facilitate chromosome segregation by condensation DNA from both sides of a centrally located replisome during cell division. This Salmonella gallinarum (strain 287/91 / NCTC 13346) protein is Chromosome partition protein MukB.